Reading from the N-terminus, the 230-residue chain is UPF0758 protein ABC2615 (230 aa).

The region spanning 104–226 is the MPN domain; sequence VISSPEDAAE…FISLKERGFF (123 aa). Zn(2+)-binding residues include H175, H177, and D188. Positions 175-188 match the JAMM motif motif; it reads HNHPSGDPSPSPED.

It belongs to the UPF0758 family.

The protein is UPF0758 protein ABC2615 of Shouchella clausii (strain KSM-K16) (Alkalihalobacillus clausii).